The primary structure comprises 261 residues: Indole-3-glycerol phosphate synthase (261 aa).

Belongs to the TrpC family.

It carries out the reaction 1-(2-carboxyphenylamino)-1-deoxy-D-ribulose 5-phosphate + H(+) = (1S,2R)-1-C-(indol-3-yl)glycerol 3-phosphate + CO2 + H2O. It functions in the pathway amino-acid biosynthesis; L-tryptophan biosynthesis; L-tryptophan from chorismate: step 4/5. This Burkholderia pseudomallei (strain 668) protein is Indole-3-glycerol phosphate synthase.